Here is a 409-residue protein sequence, read N- to C-terminus: uncharacterized protein (409 aa).

An EAL domain is found at 1 to 209; sequence MRVFVARQPI…GHDLSTHFYS (209 aa). One can recognise an HDOD domain in the interval 203–392; it reads LSTHFYSYYE…GNQLDKEEAY (190 aa).

This is an uncharacterized protein from Bacillus subtilis (strain 168).